Reading from the N-terminus, the 625-residue chain is tRNA uridine 5-carboxymethylaminomethyl modification enzyme MnmG (625 aa).

FAD contacts are provided by residues 9-14 (GGGHAG), V121, and S177. An NAD(+)-binding site is contributed by 271-285 (GPRYCPSIEDKVNRF). Q368 contacts FAD.

It belongs to the MnmG family. As to quaternary structure, homodimer. Heterotetramer of two MnmE and two MnmG subunits. FAD is required as a cofactor.

It localises to the cytoplasm. Functionally, NAD-binding protein involved in the addition of a carboxymethylaminomethyl (cmnm) group at the wobble position (U34) of certain tRNAs, forming tRNA-cmnm(5)s(2)U34. The protein is tRNA uridine 5-carboxymethylaminomethyl modification enzyme MnmG of Aliarcobacter butzleri (strain RM4018) (Arcobacter butzleri).